Here is a 475-residue protein sequence, read N- to C-terminus: Aspartyl/glutamyl-tRNA(Asn/Gln) amidotransferase subunit B (475 aa).

The protein belongs to the GatB/GatE family. GatB subfamily. Heterotrimer of A, B and C subunits.

The enzyme catalyses L-glutamyl-tRNA(Gln) + L-glutamine + ATP + H2O = L-glutaminyl-tRNA(Gln) + L-glutamate + ADP + phosphate + H(+). It carries out the reaction L-aspartyl-tRNA(Asn) + L-glutamine + ATP + H2O = L-asparaginyl-tRNA(Asn) + L-glutamate + ADP + phosphate + 2 H(+). Its function is as follows. Allows the formation of correctly charged Asn-tRNA(Asn) or Gln-tRNA(Gln) through the transamidation of misacylated Asp-tRNA(Asn) or Glu-tRNA(Gln) in organisms which lack either or both of asparaginyl-tRNA or glutaminyl-tRNA synthetases. The reaction takes place in the presence of glutamine and ATP through an activated phospho-Asp-tRNA(Asn) or phospho-Glu-tRNA(Gln). This chain is Aspartyl/glutamyl-tRNA(Asn/Gln) amidotransferase subunit B, found in Caldanaerobacter subterraneus subsp. tengcongensis (strain DSM 15242 / JCM 11007 / NBRC 100824 / MB4) (Thermoanaerobacter tengcongensis).